Here is a 201-residue protein sequence, read N- to C-terminus: MSRYRGPRFKKIRRLGALPGLTSKRPSPGSDLRNQSRSGKRSQYRIRLEEKQKLRFHYGLTERQLLRYVRIAGKAKGSTGQVLLQLLEMRLDNILFRLGMASTIPGARQLVNHRHILVNGRIVDIPSYRCKPQDIITTRDEQRSRALIQKSIDSSPHEEVPKHLTLYPFQYKALVNKIIDSQWIGLKINELLVVEYYSRQT.

The disordered stretch occupies residues 15 to 43 (LGALPGLTSKRPSPGSDLRNQSRSGKRSQ). One can recognise an S4 RNA-binding domain in the interval 89 to 150 (MRLDNILFRL…EQRSRALIQK (62 aa)).

Belongs to the universal ribosomal protein uS4 family. As to quaternary structure, part of the 30S ribosomal subunit. Contacts protein S5. The interaction surface between S4 and S5 is involved in control of translational fidelity.

Its subcellular location is the plastid. It is found in the chloroplast. One of the primary rRNA binding proteins, it binds directly to 16S rRNA where it nucleates assembly of the body of the 30S subunit. Functionally, with S5 and S12 plays an important role in translational accuracy. This Ceratophyllum demersum (Rigid hornwort) protein is Small ribosomal subunit protein uS4c (rps4).